We begin with the raw amino-acid sequence, 81 residues long: Defensin-like protein 144 (81 aa).

An N-terminal signal peptide occupies residues M1–A24. Disulfide bonds link C30–C74, C42–C61, C47–C69, and C51–C71.

It belongs to the DEFL family.

The protein localises to the secreted. This is Defensin-like protein 144 (LCR10) from Arabidopsis thaliana (Mouse-ear cress).